Reading from the N-terminus, the 126-residue chain is Large ribosomal subunit protein bL12 (126 aa).

This sequence belongs to the bacterial ribosomal protein bL12 family. Homodimer. Part of the ribosomal stalk of the 50S ribosomal subunit. Forms a multimeric L10(L12)X complex, where L10 forms an elongated spine to which 2 to 4 L12 dimers bind in a sequential fashion. Binds GTP-bound translation factors.

In terms of biological role, forms part of the ribosomal stalk which helps the ribosome interact with GTP-bound translation factors. Is thus essential for accurate translation. This chain is Large ribosomal subunit protein bL12, found in Chlorobaculum tepidum (strain ATCC 49652 / DSM 12025 / NBRC 103806 / TLS) (Chlorobium tepidum).